The chain runs to 243 residues: 3-deoxy-manno-octulosonate cytidylyltransferase (243 aa).

This sequence belongs to the KdsB family.

It localises to the cytoplasm. It carries out the reaction 3-deoxy-alpha-D-manno-oct-2-ulosonate + CTP = CMP-3-deoxy-beta-D-manno-octulosonate + diphosphate. It functions in the pathway nucleotide-sugar biosynthesis; CMP-3-deoxy-D-manno-octulosonate biosynthesis; CMP-3-deoxy-D-manno-octulosonate from 3-deoxy-D-manno-octulosonate and CTP: step 1/1. The protein operates within bacterial outer membrane biogenesis; lipopolysaccharide biosynthesis. Its function is as follows. Activates KDO (a required 8-carbon sugar) for incorporation into bacterial lipopolysaccharide in Gram-negative bacteria. The protein is 3-deoxy-manno-octulosonate cytidylyltransferase of Helicobacter pylori (strain ATCC 700392 / 26695) (Campylobacter pylori).